Here is a 118-residue protein sequence, read N- to C-terminus: uncharacterized protein (118 aa).

The protein to M.jannaschii MJ0310 and MJ1340.

This is an uncharacterized protein from Methanocaldococcus jannaschii (strain ATCC 43067 / DSM 2661 / JAL-1 / JCM 10045 / NBRC 100440) (Methanococcus jannaschii).